The chain runs to 213 residues: Large ribosomal subunit protein uL1 (213 aa).

Belongs to the universal ribosomal protein uL1 family. In terms of assembly, part of the 50S ribosomal subunit.

Its function is as follows. Binds directly to 23S rRNA. Probably involved in E site tRNA release. Protein L1 is also a translational repressor protein, it controls the translation of its operon by binding to its mRNA. The polypeptide is Large ribosomal subunit protein uL1 (Methanocella arvoryzae (strain DSM 22066 / NBRC 105507 / MRE50)).